A 126-amino-acid chain; its full sequence is Large ribosomal subunit protein bL12 (126 aa).

The protein belongs to the bacterial ribosomal protein bL12 family. Homodimer. Part of the ribosomal stalk of the 50S ribosomal subunit. Forms a multimeric L10(L12)X complex, where L10 forms an elongated spine to which 2 to 4 L12 dimers bind in a sequential fashion. Binds GTP-bound translation factors.

Forms part of the ribosomal stalk which helps the ribosome interact with GTP-bound translation factors. Is thus essential for accurate translation. The polypeptide is Large ribosomal subunit protein bL12 (Nitrosococcus oceani (strain ATCC 19707 / BCRC 17464 / JCM 30415 / NCIMB 11848 / C-107)).